Here is a 633-residue protein sequence, read N- to C-terminus: Heterogeneous nuclear ribonucleoprotein R (633 aa).

A disordered region spans residues 1 to 24; sequence MANQVNGNAVQLKEEEEPMDTSSV. At Ala2 the chain carries N-acetylalanine. Residues Lys13 and Lys171 each participate in a glycyl lysine isopeptide (Lys-Gly) (interchain with G-Cter in SUMO2) cross-link. RRM domains lie at 165–244, 246–328, and 341–411; these read TEVF…ISVA, NRLF…WADP, and KVLF…LAKP. Lys359 is covalently cross-linked (Glycyl lysine isopeptide (Lys-Gly) (interchain with G-Cter in SUMO2)). An N6-acetyllysine modification is found at Lys366. The Nuclear localization signal motif lies at 412–418; the sequence is PDKKRKE. A disordered region spans residues 412 to 456; the sequence is PDKKRKERQAARQASRSTAYEDYYYHPPPRMPPPIRGRGRGGGRG. Residues 437–446 show a composition bias toward pro residues; it reads HPPPRMPPPI. Positions 447-567 are RNA-binding RGG-box; it reads RGRGRGGGRG…SRGSRGNRGG (121 aa). The 1; approximate repeat unit spans residues 462–471; sequence PDYYGYEDYY. Positions 462 to 497 are 3 X 11 AA approximate repeats of D-D-Y-Y-G-Y-D-Y-H-D-Y; sequence PDYYGYEDYYDDYYGYDYHDYRGGYEDPYYGYDDGY. The stretch at 472–482 is repeat 2; that stretch reads DDYYGYDYHDY. The 3; approximate repeat unit spans residues 488-497; that stretch reads DPYYGYDDGY. Gly residues predominate over residues 501–510; that stretch reads GRGGGRGGRG. Residues 501 to 633 are disordered; that stretch reads GRGGGRGGRG…YQDTYGQQWK (133 aa). Residues 511 to 524 show a composition bias toward pro residues; the sequence is APPPPRGRGAPPPR. Residues 525–541 show a composition bias toward low complexity; that stretch reads GRAGYSQRGAPLGPPRG. Positions 558-570 are enriched in gly residues; that stretch reads SRGSRGNRGGNVG. The span at 588-604 shows a compositional bias: polar residues; sequence TNNQQNWGSQPIAQQPL. The span at 605–621 shows a compositional bias: low complexity; that stretch reads QQGGDYSGNYGYNNDNQ. Over residues 622-633 the composition is skewed to polar residues; sequence EFYQDTYGQQWK.

In terms of assembly, identified in the spliceosome C complex. Identified in a IGF2BP1-dependent mRNP granule complex containing untranslated mRNAs. Interacts with GTPBP1.

It localises to the nucleus. It is found in the microsome. The protein localises to the nucleoplasm. The protein resides in the cytoplasm. Functionally, component of ribonucleosomes, which are complexes of at least 20 other different heterogeneous nuclear ribonucleoproteins (hnRNP). hnRNP play an important role in processing of precursor mRNA in the nucleus. The sequence is that of Heterogeneous nuclear ribonucleoprotein R (HNRNPR) from Homo sapiens (Human).